The sequence spans 579 residues: Multidrug resistance-like ATP-binding protein MdlA (579 aa).

The 286-residue stretch at Tyr-18–Arg-303 folds into the ABC transmembrane type-1 domain. The next 6 membrane-spanning stretches (helical) occupy residues Ile-20–Gly-40, Lys-53–Leu-73, Gly-134–Thr-154, Gln-155–Ile-175, Ile-247–Ile-267, and Ile-281–Ile-301. An ABC transporter domain is found at Val-338–Leu-572. Position 370 to 377 (Gly-370 to Ser-377) interacts with ATP.

The protein belongs to the ABC transporter superfamily. Drug exporter-2 (TC 3.A.1.117) family.

The protein localises to the cell membrane. The catalysed reaction is ATP + H2O + xenobioticSide 1 = ADP + phosphate + xenobioticSide 2.. This Buchnera aphidicola subsp. Baizongia pistaciae (strain Bp) protein is Multidrug resistance-like ATP-binding protein MdlA (mdlA).